We begin with the raw amino-acid sequence, 470 residues long: E3 SUMO-protein ligase EGR2 (470 aa).

The segment covering 126–141 (PPASTTASSSVTSASP) has biased composition (low complexity). Disordered stretches follow at residues 126–153 (PPASTTASSSVTSASPNPLATGPLGVCT), 159–178 (PELDHLYSPPPPPPPYSGCT), and 185–210 (PSAFLSPPSTTSTSSLAYQPPPSYPS). Residues 190–202 (SPPSTTSTSSLAY) are compositionally biased toward low complexity. An N6-acetyllysine; by EP300 modification is found at K247. Residues 275 to 291 (GPGAGVTGPGASGGGEG) show a composition bias toward gly residues. Positions 275–345 (GPGAGVTGPG…PYPCPAEGCD (71 aa)) are disordered. 3 C2H2-type zinc fingers span residues 337-361 (YPCPAEGCDRRFSRSDELTRHIRIH), 367-389 (FQCRICMRNFSRSDHLTTHIRTH), and 395-417 (FACDYCGRKFARSDERKRHTKIH). Positions 408 to 470 (DERKRHTKIH…ASCTSRTRTP (63 aa)) are disordered. Residues 412–422 (RHTKIHLRQKE) are compositionally biased toward basic residues. Over residues 426–439 (SAPSAPPSAQSSAS) the composition is skewed to low complexity. Gly residues predominate over residues 440–450 (GPGGSQAGGSL).

It belongs to the EGR C2H2-type zinc-finger protein family. In terms of assembly, interacts with HCFC1. Interacts with WWP2. Interacts with UBC9. Interacts with CITED1. Interacts (via phosphorylated form) with SFN. Post-translationally, ubiquitinated by WWP2 leading to proteasomal degradation. In terms of processing, acetylated at Lys-247. May be deacetylated by HDAC6, HDAC10 or SIRT1. As to expression, expressed mainly in the thymus.

The protein localises to the nucleus. Its pathway is protein modification; protein sumoylation. Functionally, sequence-specific DNA-binding transcription factor. Plays a role in hindbrain segmentation by regulating the expression of a subset of homeobox containing genes and in Schwann cell myelination by regulating the expression of genes involved in the formation and maintenance of myelin. Binds to two EGR2-consensus sites EGR2A (5'-CTGTAGGAG-3') and EGR2B (5'-ATGTAGGTG-3') in the HOXB3 enhancer and promotes HOXB3 transcriptional activation. Binds to specific DNA sites located in the promoter region of HOXA4, HOXB2 and ERBB2. Regulates hindbrain segmentation by controlling the expression of Hox genes, such as HOXA4, HOXB3 and HOXB2, and thereby specifying odd and even rhombomeres. Promotes the expression of HOXB3 in the rhombomere r5 and of HOXB3 in r3 and r5 in the hindbrain. Regulates myelination in the peripheral nervous system after birth, possibly by regulating the expression of myelin proteins, such as MPZ, and by promoting the differentiation of Schwann cells. Involved in the development of the jaw openener musculature, probably by playing a role in its innervation through trigeminal motor neurons. May play a role in adipogenesis, possibly by regulating the expression of CEBPB. In terms of biological role, E3 SUMO-protein ligase helping SUMO1 conjugation to its coregulators NAB1 and NAB2, whose sumoylation down-regulates EGR2 transcriptional activity. The protein is E3 SUMO-protein ligase EGR2 (Egr2) of Mus musculus (Mouse).